The sequence spans 395 residues: Elongation factor Tu (395 aa).

The region spanning Lys-10–Gln-204 is the tr-type G domain. The tract at residues Gly-19–Thr-26 is G1. Position 19 to 26 (Gly-19 to Thr-26) interacts with GTP. Thr-26 contributes to the Mg(2+) binding site. Residues Gly-60–Ser-64 are G2. Residues Asp-81 to Gly-84 form a G3 region. GTP contacts are provided by residues Asp-81–His-85 and Asn-136–Asp-139. Residues Asn-136 to Asp-139 form a G4 region. Residues Ser-174–Leu-176 are G5.

Belongs to the TRAFAC class translation factor GTPase superfamily. Classic translation factor GTPase family. EF-Tu/EF-1A subfamily. Monomer.

It is found in the cytoplasm. The enzyme catalyses GTP + H2O = GDP + phosphate + H(+). Functionally, GTP hydrolase that promotes the GTP-dependent binding of aminoacyl-tRNA to the A-site of ribosomes during protein biosynthesis. The polypeptide is Elongation factor Tu (Geobacillus sp. (strain WCH70)).